Here is a 116-residue protein sequence, read N- to C-terminus: MKVLAKTKQAEKSPAPWRAVPCGDTKPIYIYSAYSEEEKERFPYSNGRLIAAVFDLSSYSQKSNASLMAAAPELLEASKAALDFLKGNSIHSKERIIQLLEKAEASAAPKRGGNKT.

The chain is Phage-like element PBSX protein XkdD (xkdD) from Bacillus subtilis (strain 168).